The chain runs to 501 residues: Probable cytochrome P450 508A4 (501 aa).

The helical transmembrane segment at 1 to 21 threads the bilayer; the sequence is MIMLIKVFVLLLVVYILHNSY. C445 contributes to the heme binding site.

This sequence belongs to the cytochrome P450 family. Heme is required as a cofactor.

The protein resides in the membrane. In Dictyostelium discoideum (Social amoeba), this protein is Probable cytochrome P450 508A4 (cyp508A4).